The chain runs to 258 residues: Glutamate racemase (258 aa).

Residues 11 to 12 and 43 to 44 each bind substrate; these read DS and YG. The Proton donor/acceptor role is filled by Cys74. 75–76 serves as a coordination point for substrate; that stretch reads NT. Cys187 acts as the Proton donor/acceptor in catalysis. 188–189 provides a ligand contact to substrate; the sequence is TH.

The protein belongs to the aspartate/glutamate racemases family.

The enzyme catalyses L-glutamate = D-glutamate. It participates in cell wall biogenesis; peptidoglycan biosynthesis. Provides the (R)-glutamate required for cell wall biosynthesis. The protein is Glutamate racemase of Bifidobacterium adolescentis (strain ATCC 15703 / DSM 20083 / NCTC 11814 / E194a).